A 437-amino-acid chain; its full sequence is Adenylosuccinate synthetase, organellar chromatophore (437 aa).

GTP contacts are provided by residues 12–18 and 40–42; these read GDEGKGK and GHT. The active-site Proton acceptor is D13. Mg(2+)-binding residues include D13 and G40. Residues 13–16, 38–41, T128, R142, Q223, T238, and R302 each bind IMP; these read DEGK and NAGH. H41 serves as the catalytic Proton donor. 298–304 serves as a coordination point for substrate; sequence TTTGRRR. GTP-binding positions include R304 and 330 to 332; that span reads KLD.

The protein belongs to the adenylosuccinate synthetase family. As to quaternary structure, homodimer. Requires Mg(2+) as cofactor.

Its subcellular location is the plastid. The protein resides in the organellar chromatophore. The catalysed reaction is IMP + L-aspartate + GTP = N(6)-(1,2-dicarboxyethyl)-AMP + GDP + phosphate + 2 H(+). Its pathway is purine metabolism; AMP biosynthesis via de novo pathway; AMP from IMP: step 1/2. Its function is as follows. Plays an important role in the de novo pathway and in the salvage pathway of purine nucleotide biosynthesis. Catalyzes the first committed step in the biosynthesis of AMP from IMP. The chain is Adenylosuccinate synthetase, organellar chromatophore from Paulinella chromatophora.